The following is a 1125-amino-acid chain: Transcription-repair-coupling factor (1125 aa).

Residues 597–758 (DMMSFKVMDR…LIKLRDISVL (162 aa)) enclose the Helicase ATP-binding domain. 610 to 617 (GDVGFGKT) is a binding site for ATP. Positions 711–714 (DEEQ) match the DEEQ box motif. The region spanning 774–933 (SFSELLIKHA…GFKIAMKDME (160 aa)) is the Helicase C-terminal domain.

This sequence in the N-terminal section; belongs to the UvrB family. The protein in the C-terminal section; belongs to the helicase family. RecG subfamily.

The protein localises to the cytoplasm. Functionally, couples transcription and DNA repair by recognizing RNA polymerase (RNAP) stalled at DNA lesions. Mediates ATP-dependent release of RNAP and its truncated transcript from the DNA, and recruitment of nucleotide excision repair machinery to the damaged site. The chain is Transcription-repair-coupling factor from Borreliella burgdorferi (strain ATCC 35210 / DSM 4680 / CIP 102532 / B31) (Borrelia burgdorferi).